The sequence spans 271 residues: Shikimate dehydrogenase (NADP(+)) (271 aa).

Residues 14–16 (SLS) and Thr-61 contribute to the shikimate site. The active-site Proton acceptor is Lys-65. Shikimate is bound by residues Asn-86 and Asp-101. NADP(+)-binding positions include 125-129 (GAGGA) and Ile-212. Tyr-214 contacts shikimate. Gly-235 provides a ligand contact to NADP(+).

The protein belongs to the shikimate dehydrogenase family. As to quaternary structure, homodimer.

It catalyses the reaction shikimate + NADP(+) = 3-dehydroshikimate + NADPH + H(+). It participates in metabolic intermediate biosynthesis; chorismate biosynthesis; chorismate from D-erythrose 4-phosphate and phosphoenolpyruvate: step 4/7. In terms of biological role, involved in the biosynthesis of the chorismate, which leads to the biosynthesis of aromatic amino acids. Catalyzes the reversible NADPH linked reduction of 3-dehydroshikimate (DHSA) to yield shikimate (SA). This is Shikimate dehydrogenase (NADP(+)) from Clostridium perfringens (strain 13 / Type A).